A 672-amino-acid polypeptide reads, in one-letter code: Probable copper-transporting P-type ATPase B (672 aa).

The span at 1–17 shows a compositional bias: basic and acidic residues; it reads MEHHSHQEHENHTSHGN. Positions 1–22 are disordered; the sequence is MEHHSHQEHENHTSHGNHEHHH. A run of 6 helical transmembrane segments spans residues 30–50, 55–75, 93–113, 125–145, 282–302, and 313–333; these read FFIS…MGVK, ISFT…FFYG, GMMT…LYAF, TMDF…GHWI, GYLF…WMLI, and LVTV…PLVT. Aspartate 365 (4-aspartylphosphate intermediate) is an active-site residue. The Mg(2+) site is built by aspartate 563 and aspartate 567. The next 2 helical transmembrane spans lie at 621–643 and 647–669; these read LWWG…ASIG and SPAV…AFTL.

Belongs to the cation transport ATPase (P-type) (TC 3.A.3) family. Type IB subfamily.

It localises to the cell membrane. It catalyses the reaction Cu(+)(in) + ATP + H2O = Cu(+)(out) + ADP + phosphate + H(+). Functionally, involved in copper transport. This Staphylococcus aureus protein is Probable copper-transporting P-type ATPase B (copB).